The primary structure comprises 95 residues: Small ribosomal subunit protein bS16 (95 aa).

This sequence belongs to the bacterial ribosomal protein bS16 family.

The protein is Small ribosomal subunit protein bS16 of Thermosipho melanesiensis (strain DSM 12029 / CIP 104789 / BI429).